We begin with the raw amino-acid sequence, 376 residues long: Protein-arginine rhamnosyltransferase (376 aa).

DTDP-beta-L-rhamnose contacts are provided by residues 13–16 (NYGD), Tyr192, 252–254 (MAQ), and 270–274 (RGEDS). DTDP is bound at residue 14–15 (YG). Asp16 functions as the Proton acceptor in the catalytic mechanism. Residues Tyr192, 252-254 (MAQ), and 270-274 (RGEDS) contribute to the dTDP site. The active site involves Glu272.

Belongs to the glycosyltransferase 104 family.

The enzyme catalyses dTDP-beta-L-rhamnose + L-arginyl-[protein] = N(omega)-(alpha-L-rhamnosyl)-L-arginyl-[protein] + dTDP + H(+). Protein-arginine rhamnosyltransferase that catalyzes the transfer of a single rhamnose to elongation factor P (EF-P) on 'Lys-32', a modification required for EF-P-dependent rescue of polyproline stalled ribosomes. This chain is Protein-arginine rhamnosyltransferase, found in Pseudomonas aeruginosa (strain ATCC 15692 / DSM 22644 / CIP 104116 / JCM 14847 / LMG 12228 / 1C / PRS 101 / PAO1).